Reading from the N-terminus, the 461-residue chain is Photosystem II CP43 reaction center protein (461 aa).

Residues 1–2 (ME) constitute a propeptide that is removed on maturation. T3 carries the post-translational modification N-acetylthreonine. T3 is subject to Phosphothreonine. The next 5 helical transmembrane spans lie at 57–81 (LFEV…PHLA), 122–143 (LIGP…KDKN), 166–188 (KAMY…RIIT), 243–263 (QPWA…LSYS), and 279–300 (WFNN…ASQS). E355 provides a ligand contact to [CaMn4O5] cluster. Residues 435–459 (RARAAAAGFEKGIDRLTEPVLSLKP) traverse the membrane as a helical segment.

It belongs to the PsbB/PsbC family. PsbC subfamily. In terms of assembly, PSII is composed of 1 copy each of membrane proteins PsbA, PsbB, PsbC, PsbD, PsbE, PsbF, PsbH, PsbI, PsbJ, PsbK, PsbL, PsbM, PsbT, PsbX, PsbY, PsbZ, Psb30/Ycf12, at least 3 peripheral proteins of the oxygen-evolving complex and a large number of cofactors. It forms dimeric complexes. The cofactor is Binds multiple chlorophylls and provides some of the ligands for the Ca-4Mn-5O cluster of the oxygen-evolving complex. It may also provide a ligand for a Cl- that is required for oxygen evolution. PSII binds additional chlorophylls, carotenoids and specific lipids..

The protein resides in the plastid. It localises to the chloroplast thylakoid membrane. Functionally, one of the components of the core complex of photosystem II (PSII). It binds chlorophyll and helps catalyze the primary light-induced photochemical processes of PSII. PSII is a light-driven water:plastoquinone oxidoreductase, using light energy to abstract electrons from H(2)O, generating O(2) and a proton gradient subsequently used for ATP formation. The protein is Photosystem II CP43 reaction center protein of Stigeoclonium helveticum (Green alga).